The primary structure comprises 231 residues: Regulatory protein VanRc (231 aa).

One can recognise a Response regulatory domain in the interval 4–117 (KIVVVDDEKE…EVVARVKTQL (114 aa)). D53 carries the post-translational modification 4-aspartylphosphate. Positions 132–231 (VEEYEKDGLI…VWGVGYIIEK (100 aa)) form a DNA-binding region, ompR/PhoB-type.

In terms of processing, phosphorylated by VanSc.

It localises to the cytoplasm. Its function is as follows. Member of the two-component regulatory system VanSc/VanRc. Binds to the promoter regions of target genes. Activates the transcription of vanC1 and vanXYC in response to vancomycin which results in vancomycin resistance. This is Regulatory protein VanRc from Enterococcus gallinarum.